The chain runs to 534 residues: CTP synthase (534 aa).

Residues 1-269 (MHVSNSKFIF…DKIIIDAFRL (269 aa)) are amidoligase domain. Serine 17 serves as a coordination point for CTP. Serine 17 contributes to the UTP binding site. 18–23 (SLGKGV) provides a ligand contact to ATP. Position 58 (tyrosine 58) interacts with L-glutamine. Aspartate 75 is an ATP binding site. Residues aspartate 75 and glutamate 143 each coordinate Mg(2+). CTP contacts are provided by residues 150–152 (DIE), 190–195 (KTKPTQ), and lysine 226. UTP contacts are provided by residues 190 to 195 (KTKPTQ) and lysine 226. One can recognise a Glutamine amidotransferase type-1 domain in the interval 294–532 (DIAIVGKYIK…IENAYIYKKE (239 aa)). Glycine 352 contributes to the L-glutamine binding site. Cysteine 379 functions as the Nucleophile; for glutamine hydrolysis in the catalytic mechanism. L-glutamine is bound by residues 380 to 383 (LGMQ), glutamate 403, and arginine 460. Active-site residues include histidine 505 and glutamate 507.

The protein belongs to the CTP synthase family. As to quaternary structure, homotetramer.

It carries out the reaction UTP + L-glutamine + ATP + H2O = CTP + L-glutamate + ADP + phosphate + 2 H(+). The enzyme catalyses L-glutamine + H2O = L-glutamate + NH4(+). It catalyses the reaction UTP + NH4(+) + ATP = CTP + ADP + phosphate + 2 H(+). The protein operates within pyrimidine metabolism; CTP biosynthesis via de novo pathway; CTP from UDP: step 2/2. With respect to regulation, allosterically activated by GTP, when glutamine is the substrate; GTP has no effect on the reaction when ammonia is the substrate. The allosteric effector GTP functions by stabilizing the protein conformation that binds the tetrahedral intermediate(s) formed during glutamine hydrolysis. Inhibited by the product CTP, via allosteric rather than competitive inhibition. Its function is as follows. Catalyzes the ATP-dependent amination of UTP to CTP with either L-glutamine or ammonia as the source of nitrogen. Regulates intracellular CTP levels through interactions with the four ribonucleotide triphosphates. This Hydrogenobaculum sp. (strain Y04AAS1) protein is CTP synthase.